We begin with the raw amino-acid sequence, 169 residues long: Succinate dehydrogenase cytochrome b560 subunit, mitochondrial (169 aa).

The transit peptide at 1 to 29 directs the protein to the mitochondrion; it reads MAALLLRHVGRHCLRAHFSPQLCIRNAVP. Topologically, residues 30 to 65 are mitochondrial matrix; that stretch reads LGTTAKEEMERFWNKNIGSNRPLSPHITIYSWSLPM. The helical transmembrane segment at 66–90 threads the bilayer; that stretch reads AMSICHRGTGIALSAGVSLFGMSAL. Residues 91-110 are Mitochondrial intermembrane-facing; the sequence is LLPGNFESYLELVKSLCLGP. Residues 111–139 traverse the membrane as a helical segment; sequence ALIHTAKFALVFPLMYHTWNGIRHLMWDL. A heme b-binding site is contributed by His127. The Mitochondrial matrix segment spans residues 140–146; that stretch reads GKGLKIP. The chain crosses the membrane as a helical span at residues 147–167; it reads QLYQSGVVVLVLTVLSSMGLA. The Mitochondrial intermembrane segment spans residues 168-169; sequence AM.

Belongs to the cytochrome b560 family. As to quaternary structure, component of complex II composed of four subunits: the flavoprotein (FP) SDHA, iron-sulfur protein (IP) SDHB, and a cytochrome b560 composed of SDHC and SDHD. Requires heme b as cofactor.

It is found in the mitochondrion inner membrane. The protein operates within carbohydrate metabolism; tricarboxylic acid cycle. In terms of biological role, membrane-anchoring subunit of succinate dehydrogenase (SDH) that is involved in complex II of the mitochondrial electron transport chain and is responsible for transferring electrons from succinate to ubiquinone (coenzyme Q). SDH also oxidizes malate to the non-canonical enol form of oxaloacetate, enol-oxaloacetate. Enol-oxaloacetate, which is a potent inhibitor of the succinate dehydrogenase activity, is further isomerized into keto-oxaloacetate. In Homo sapiens (Human), this protein is Succinate dehydrogenase cytochrome b560 subunit, mitochondrial (SDHC).